We begin with the raw amino-acid sequence, 229 residues long: uncharacterized protein (229 aa).

7 helical membrane-spanning segments follow: residues 21 to 41, 56 to 76, 83 to 103, 109 to 129, 141 to 161, 162 to 182, and 202 to 222; these read IYSL…LMLY, MIYY…SSAA, ALPI…FIIV, TVFQ…IIGV, AMFA…FIGS, GMMS…LIAS, and WAVA…ISLL.

Belongs to the BI1 family.

It localises to the cell membrane. This is an uncharacterized protein from Streptococcus pyogenes serotype M1.